The chain runs to 367 residues: UDP-D-xylose:L-fucose alpha-1,3-D-xylosyltransferase (367 aa).

Residues 1 to 10 are compositionally biased toward polar residues; it reads MAQKQQTLHQ. Residues 1 to 21 are disordered; the sequence is MAQKQQTLHQQRPFSSSPRSY. Residues 1-35 lie on the Cytoplasmic side of the membrane; sequence MAQKQQTLHQQRPFSSSPRSYSSISNRPIFLLSRN. Residues 12–21 show a composition bias toward low complexity; sequence RPFSSSPRSY. A helical; Signal-anchor for type II membrane protein transmembrane segment spans residues 36-56; the sequence is GLLLVLLALFLLLGVFLPWPG. Topologically, residues 57–367 are lumenal; that stretch reads SPLLLFPNKV…ALESPLGKLQ (311 aa). 3 N-linked (GlcNAc...) asparagine glycosylation sites follow: asparagine 85, asparagine 98, and asparagine 173. The short motif at 196-198 is the DXD motif element; sequence DVD. Residues asparagine 228 and asparagine 292 are each glycosylated (N-linked (GlcNAc...) asparagine).

Belongs to the glycosyltransferase 77 family. The cofactor is Mn(2+). Mg(2+) serves as cofactor. In terms of processing, glycosylated. Expressed in roots, rosette leaves, stems and flowers.

The protein localises to the golgi apparatus membrane. Its function is as follows. Catalyzes the transfer of D-xylose from UDP-alpha-D-xylose onto L-fucose. Probably involved in the biosynthesis of rhamnogalacturonan II (RG-II) through xylosylation of the internal fucose moiety of the A-chain of RG-II, a structurally complex pectic polysaccharide of the primary cell wall. RG-II is essential for the cell wall integrity of rapidly growing tissues such as roots and pollen tube growth and elongation. The protein is UDP-D-xylose:L-fucose alpha-1,3-D-xylosyltransferase of Arabidopsis thaliana (Mouse-ear cress).